The sequence spans 92 residues: Small ribosomal subunit protein bS20 (92 aa).

Residues 1 to 23 form a disordered region; sequence MANTPSAKKRAKQAEKRRSHNAS. The segment covering 7-20 has biased composition (basic residues); sequence AKKRAKQAEKRRSH.

This sequence belongs to the bacterial ribosomal protein bS20 family.

Its function is as follows. Binds directly to 16S ribosomal RNA. The polypeptide is Small ribosomal subunit protein bS20 (Pseudomonas fluorescens (strain SBW25)).